Consider the following 398-residue polypeptide: Stearoyl-[acyl-carrier-protein] 9-desaturase, chloroplastic (398 aa).

Residues 1–34 (MALKLHHTAFNPSMAVTSSGLPRSYHLRSHRVFM) constitute a chloroplast transit peptide. Positions 46-66 (IPNAKKPHMPPREAHVQKTHS) are disordered. Fe cation contacts are provided by Glu-140, Glu-178, His-181, Glu-231, Glu-264, and His-267.

The protein belongs to the fatty acid desaturase type 2 family. Homodimer. It depends on Fe(2+) as a cofactor.

The protein localises to the plastid. Its subcellular location is the chloroplast. The catalysed reaction is octadecanoyl-[ACP] + 2 reduced [2Fe-2S]-[ferredoxin] + O2 + 2 H(+) = (9Z)-octadecenoyl-[ACP] + 2 oxidized [2Fe-2S]-[ferredoxin] + 2 H2O. It functions in the pathway lipid metabolism; fatty acid metabolism. Functionally, converts stearoyl-ACP to oleoyl-ACP by introduction of a cis double bond between carbons 9 and 10 of the acyl chain. This chain is Stearoyl-[acyl-carrier-protein] 9-desaturase, chloroplastic, found in Simmondsia chinensis (Jojoba).